The following is a 580-amino-acid chain: Putative multidrug export ATP-binding/permease protein YgaD (580 aa).

Over 1 to 17 (MGVMKRYMQFVKPYKKQ) the chain is Cytoplasmic. A helical transmembrane segment spans residues 18 to 38 (IFVTVLIGIVKFSIPLALPLL). The ABC transmembrane type-1 domain occupies 19–307 (FVTVLIGIVK…LINSSTTLTQ (289 aa)). Over 39–57 (LKYVVDDIIQGGGTASDKT) the chain is Extracellular. Residues 58–78 (TSLFTIMAIMFALFLILRPPV) form a helical membrane-spanning segment. Topologically, residues 79-135 (EYYRQYFAQWTASKVLYDIRAKLFDHIQKLSLRFYANTRTGEVISRVINDVEQTKDF) are cytoplasmic. A helical transmembrane segment spans residues 136–156 (VITGLMNIWLDMLTILIVISI). At 157–163 (MLTLDVK) the chain is on the extracellular side. The chain crosses the membrane as a helical span at residues 164–184 (LTLISIVLFPLYGISVKYFYG). The Cytoplasmic portion of the chain corresponds to 185-243 (RLRKLTRERSQALAQVQGHLHERIQGMPVIRSFAIEDHEQAQFNEKNGHFLDKAIRHTN). Residues 244–263 (WNAKTFAVVNTITDLAPLIV) traverse the membrane as a helical segment. Residues 264 to 268 (IACAG) are Extracellular-facing. The chain crosses the membrane as a helical span at residues 269–288 (YFVINGPLTVGTMVAFVGYI). The Cytoplasmic segment spans residues 289 to 580 (DRMYNPVRRL…KHLFTIQNLN (292 aa)). Residues 341–576 (VEFQNVSFQY…ESQYKHLFTI (236 aa)) form the ABC transporter domain. 375–382 (GMSGGGKS) lines the ATP pocket.

Belongs to the ABC transporter superfamily. Homodimer.

The protein resides in the cell membrane. In terms of biological role, may be involved in multidrug export. Transmembrane domains (TMD) form a pore in the cell membrane and the ATP-binding domain (NBD) is responsible for energy generation. The sequence is that of Putative multidrug export ATP-binding/permease protein YgaD (ygaD) from Bacillus subtilis (strain 168).